The chain runs to 128 residues: Prokineticin-2 (128 aa).

Residues 1 to 27 form the signal peptide; sequence MRSSRCARLLLLLLLPPLLLTPPAGDA. Intrachain disulfides connect Cys-34/Cys-46, Cys-40/Cys-58, Cys-45/Cys-106, Cys-68/Cys-114, and Cys-108/Cys-124. Positions 71–95 are disordered; sequence MTRKNHFGNGRQERRKRKRRRKKKV. Residues 83-95 show a composition bias toward basic residues; the sequence is ERRKRKRRRKKKV.

It belongs to the AVIT (prokineticin) family.

It localises to the secreted. Its function is as follows. May function as an output molecule from the suprachiasmatic nucleus (SCN) that transmits behavioral circadian rhythm. May also function locally within the SCN to synchronize output. Potently contracts gastrointestinal (GI) smooth muscle. The protein is Prokineticin-2 (PROK2) of Bos taurus (Bovine).